Here is a 598-residue protein sequence, read N- to C-terminus: Kinesin-like protein klp-3 (598 aa).

2 coiled-coil regions span residues 19 to 66 (EVEL…FIQG) and 89 to 118 (GNLSEENLRLKNALSQMQKVARVNELLETD). Residues 133–155 (ALSRDSSCSVPRSVSPQPTGDVI) are disordered. The segment covering 136 to 150 (RDSSCSVPRSVSPQP) has biased composition (polar residues). Residues 170–248 (HWKKLQRCAE…LVELNGNIRV (79 aa)) adopt a coiled-coil conformation. A Kinesin motor domain is found at 245–565 (NIRVFYRIRP…VNFAEKIGQV (321 aa)). 328–335 (GHTGSGKT) is a binding site for ATP. Residues 569-598 (SGTMKREPTRRSMTGISSGQRREIPASPRK) form a disordered region.

Belongs to the TRAFAC class myosin-kinesin ATPase superfamily. Kinesin family.

Its subcellular location is the cytoplasm. It is found in the cytoskeleton. This chain is Kinesin-like protein klp-3 (klp-3), found in Caenorhabditis elegans.